A 2788-amino-acid chain; its full sequence is Multiple epidermal growth factor-like domains protein 8 (2788 aa).

Residues 1-27 (MALGGALAAALALAFAVLGPLSHKVLA) form the signal peptide. The Extracellular portion of the chain corresponds to 28 to 2590 (GDCKGQRQVL…FFRQDQAHID (2563 aa)). 6 disulfides stabilise this stretch: Cys30-Cys57, Cys142-Cys152, Cys146-Cys158, Cys174-Cys184, Cys178-Cys191, and Cys193-Cys202. Positions 30–140 (CKGQRQVLRE…LGFNASFRFS (111 aa)) constitute a CUB 1 domain. N-linked (GlcNAc...) asparagine glycosylation is present at Asn50. 2 consecutive EGF-like domains span residues 138–168 (RFSL…GGPD) and 170–203 (GLQE…RACD). Kelch repeat units lie at residues 241-287 (LLAV…AVAW), 290-338 (FLVL…AGHA), 346-399 (WLYV…FHAP), 402-453 (TLLV…FHTA), 459-511 (YMVV…APPS), and 525-575 (VLLV…SRDP). 3 PSI domains span residues 561–613 (YCSM…SDCQ), 847–899 (ACSS…ALCP), and 900–947 (LCEE…EECP). Residue Asn1048 is glycosylated (N-linked (GlcNAc...) asparagine). One can recognise an EGF-like 3; calcium-binding domain in the interval 1074–1115 (DVDECRLGLARCHPRATCLNTPLSYECHCQRGYQGDGITHCN). 16 cysteine pairs are disulfide-bonded: Cys1078–Cys1091, Cys1085–Cys1100, Cys1102–Cys1114, Cys1163–Cys1171, Cys1165–Cys1179, Cys1182–Cys1191, Cys1194–Cys1208, Cys1211–Cys1224, Cys1213–Cys1231, Cys1233–Cys1242, Cys1245–Cys1259, Cys1263–Cys1302, Cys1336–Cys1367, Cys1407–Cys1421, Cys1415–Cys1433, and Cys1435–Cys1444. 2 consecutive Laminin EGF-like domains span residues 1163–1210 (CGCN…GCRP) and 1211–1261 (CQCN…SCFR). The region spanning 1263-1405 (CGGRALLTNV…WGFNASVGSA (143 aa)) is the CUB 2 domain. Asn1271 carries an N-linked (GlcNAc...) asparagine glycan. Phosphothreonine is present on Thr1353. In terms of domain architecture, EGF-like 4 spans 1403–1445 (GSARCGSGGPGSCPVPQECVPQDGAAGAGLCRCPQGWAGPHCR). Kelch repeat units follow at residues 1522 to 1570 (TLWM…SFHA), 1580 to 1626 (AMYL…HTLT), 1632 to 1678 (SLLL…SAVY), 1684 to 1734 (SLYV…HASA), 1739 to 1786 (TMVV…ESVA), and 1795 to 1840 (RLYI…WCHG). PSI domains are found at residues 1819–1859 (PCRL…PPCS), 1867–1922 (ECRR…NDCR), 2003–2061 (PCHL…ESCS), and 2063–2120 (GCAQ…LSCP). The N-linked (GlcNAc...) asparagine glycan is linked to Asn2009. The EGF-like 5 domain occupies 2121–2159 (PEDECANGHHDCNETQNCHDQPHGYECSCKTGYTMDNVT). 2 disulfide bridges follow: Cys2125–Cys2138 and Cys2132–Cys2147. N-linked (GlcNAc...) asparagine glycosylation is found at Asn2157 and Asn2172. 4 disulfide bridges follow: Cys2196–Cys2204, Cys2198–Cys2213, Cys2216–Cys2225, and Cys2228–Cys2242. 2 consecutive Laminin EGF-like domains span residues 2196-2244 (CRCN…TCRP) and 2323-2386 (CQCN…QCYR). The interval 2465 to 2507 (HTVHIQPPPPPPPPPPPADGVPRVASDLGGLGTGSGSGSPVEP) is disordered. Positions 2470 to 2483 (QPPPPPPPPPPPAD) are enriched in pro residues. Residues 2591–2611 (LFVFFSVFFSCFFLFLSLCVL) traverse the membrane as a helical segment. Residues 2612-2788 (LWKAKQALDQ…SQDNLTSMSL (177 aa)) lie on the Cytoplasmic side of the membrane. The span at 2761–2775 (GGAGGSGHGGGGGRK) shows a compositional bias: gly residues. Positions 2761–2788 (GGAGGSGHGGGGGRKGLLSQDNLTSMSL) are disordered. Positions 2779 to 2788 (SQDNLTSMSL) are enriched in polar residues.

As to expression, expressed in brain.

Its subcellular location is the membrane. In terms of biological role, acts as a negative regulator of hedgehog signaling. The protein is Multiple epidermal growth factor-like domains protein 8 (Megf8) of Rattus norvegicus (Rat).